Reading from the N-terminus, the 201-residue chain is Large ribosomal subunit protein uL4 (201 aa).

A disordered region spans residues 45-72 (AQKTRAEVTGSGKKPWRQKGTGRARAGS).

The protein belongs to the universal ribosomal protein uL4 family. Part of the 50S ribosomal subunit.

Functionally, one of the primary rRNA binding proteins, this protein initially binds near the 5'-end of the 23S rRNA. It is important during the early stages of 50S assembly. It makes multiple contacts with different domains of the 23S rRNA in the assembled 50S subunit and ribosome. Its function is as follows. Forms part of the polypeptide exit tunnel. The protein is Large ribosomal subunit protein uL4 of Shewanella frigidimarina (strain NCIMB 400).